We begin with the raw amino-acid sequence, 435 residues long: Glutamate-1-semialdehyde 2,1-aminomutase (435 aa).

Lys-266 carries the post-translational modification N6-(pyridoxal phosphate)lysine.

This sequence belongs to the class-III pyridoxal-phosphate-dependent aminotransferase family. HemL subfamily. In terms of assembly, homodimer. It depends on pyridoxal 5'-phosphate as a cofactor.

It is found in the cytoplasm. It carries out the reaction (S)-4-amino-5-oxopentanoate = 5-aminolevulinate. It participates in porphyrin-containing compound metabolism; protoporphyrin-IX biosynthesis; 5-aminolevulinate from L-glutamyl-tRNA(Glu): step 2/2. This chain is Glutamate-1-semialdehyde 2,1-aminomutase, found in Helicobacter hepaticus (strain ATCC 51449 / 3B1).